The following is a 303-amino-acid chain: Nucleotide-binding protein USA300HOU_0794 (303 aa).

18–25 (GLSGAGKS) lines the ATP pocket. 69 to 72 (DLRG) contributes to the GTP binding site.

This sequence belongs to the RapZ-like family.

Displays ATPase and GTPase activities. The protein is Nucleotide-binding protein USA300HOU_0794 of Staphylococcus aureus (strain USA300 / TCH1516).